The primary structure comprises 150 residues: Ribonuclease pancreatic delta-type (150 aa).

The signal sequence occupies residues 1-25 (MGLEKSFILFSLLVLVLGWVQPSLG). R35 serves as a coordination point for substrate. H37 serves as the catalytic Proton acceptor. Intrachain disulfides connect C51–C110, C65–C121, C83–C136, and C90–C98. Substrate contacts are provided by residues 66–70 (KPVNT) and K91. Residue H145 is the Proton donor of the active site.

It belongs to the pancreatic ribonuclease family. As to quaternary structure, monomer.

The protein localises to the secreted. The catalysed reaction is an [RNA] containing cytidine + H2O = an [RNA]-3'-cytidine-3'-phosphate + a 5'-hydroxy-ribonucleotide-3'-[RNA].. It carries out the reaction an [RNA] containing uridine + H2O = an [RNA]-3'-uridine-3'-phosphate + a 5'-hydroxy-ribonucleotide-3'-[RNA].. Endonuclease that catalyzes the cleavage of RNA on the 3' side of pyrimidine nucleotides. Acts on single-stranded and double-stranded RNA. In Rattus tiomanicus (Malayan field rat), this protein is Ribonuclease pancreatic delta-type.